A 338-amino-acid polypeptide reads, in one-letter code: MNNLYQRDCLRLLDFTSLELQNIITLAQKLKQYKKNNKEIQLLKKKNIALIFEKESTRTRCSFEVAAFDQGAHVTYLGPGSTHLGTKESIEDTAKILGRLYDGIQYRGHHHSTIEILAKNSKVPVWNGLTEKFHPTQLLADLLTIKEIFPERKFYEIKCAYVGDAHNNMGNSLLEAASLVGLDLRLVAPKECWPEKNIFKFCKEQMKNKKGNIICTENINEGVKNVDFIYTDVWVSMGESQEVWKKRIELLSSYQVNSLMLKITNNPQVKVLHCLPALHDQKTCTVKSILKKYGFKNGMEITDEVFQKNQKIIFEQAENRLHTIKAILVSSLLKTIKF.

Carbamoyl phosphate-binding positions include 56 to 59 (STRT), Arg-107, and 134 to 137 (HPTQ). Residues Asn-168, Asp-232, and 236 to 237 (SM) each bind L-ornithine. Carbamoyl phosphate is bound by residues 274–275 (CL) and Arg-320.

The protein belongs to the aspartate/ornithine carbamoyltransferase superfamily. OTCase family.

The protein resides in the cytoplasm. It catalyses the reaction carbamoyl phosphate + L-ornithine = L-citrulline + phosphate + H(+). The protein operates within amino-acid biosynthesis; L-arginine biosynthesis; L-arginine from L-ornithine and carbamoyl phosphate: step 1/3. Its function is as follows. Reversibly catalyzes the transfer of the carbamoyl group from carbamoyl phosphate (CP) to the N(epsilon) atom of ornithine (ORN) to produce L-citrulline. The polypeptide is Ornithine carbamoyltransferase (argI) (Buchnera aphidicola subsp. Acyrthosiphon pisum (strain APS) (Acyrthosiphon pisum symbiotic bacterium)).